The sequence spans 234 residues: Phosphoglycolate phosphatase (234 aa).

The active-site Nucleophile is aspartate 13. 3 residues coordinate Mg(2+): aspartate 13, aspartate 15, and aspartate 175.

The protein belongs to the HAD-like hydrolase superfamily. CbbY/CbbZ/Gph/YieH family. In terms of assembly, monomer. Requires Mg(2+) as cofactor. Chloride serves as cofactor.

The enzyme catalyses 2-phosphoglycolate + H2O = glycolate + phosphate. Its pathway is organic acid metabolism; glycolate biosynthesis; glycolate from 2-phosphoglycolate: step 1/1. Specifically catalyzes the dephosphorylation of 2-phosphoglycolate. Is involved in the dissimilation of the intracellular 2-phosphoglycolate formed during the DNA repair of 3'-phosphoglycolate ends, a major class of DNA lesions induced by oxidative stress. The chain is Phosphoglycolate phosphatase from Pectobacterium atrosepticum (strain SCRI 1043 / ATCC BAA-672) (Erwinia carotovora subsp. atroseptica).